A 183-amino-acid chain; its full sequence is dCTP deaminase, dUMP-forming (183 aa).

DCTP-binding positions include 99–104 (KSSIAR), Asp-117, 125–127 (TLE), Gln-146, Tyr-159, Lys-166, and Gln-170. Glu-127 (proton donor/acceptor) is an active-site residue.

It belongs to the dCTP deaminase family. Homotrimer.

It carries out the reaction dCTP + 2 H2O = dUMP + NH4(+) + diphosphate. It functions in the pathway pyrimidine metabolism; dUMP biosynthesis; dUMP from dCTP: step 1/1. Functionally, bifunctional enzyme that catalyzes both the deamination of dCTP to dUTP and the hydrolysis of dUTP to dUMP without releasing the toxic dUTP intermediate. This is dCTP deaminase, dUMP-forming from Methanoregula boonei (strain DSM 21154 / JCM 14090 / 6A8).